The primary structure comprises 475 residues: Trifunctional enzyme subunit beta, mitochondrial (475 aa).

A mitochondrion-targeting transit peptide spans 1–34 (MISLLTYTLKNLPNTSKWALRFCMRPLSSSSQLQ). Position 73 is an N6-acetyllysine; alternate (Lys-73). Lys-73 carries the post-translational modification N6-succinyllysine; alternate. The active-site Acyl-thioester intermediate is the Cys-139. Residues 174-221 (IRHSRKMRKMMLDLNKAKTLAQRLSIISKFRLNFLSPELPAVSEFSTS) lie within the membrane without spanning it. Lys-189 is subject to N6-acetyllysine; alternate. Lys-189 is subject to N6-succinyllysine; alternate. N6-succinyllysine occurs at positions 191 and 292. N6-acetyllysine; alternate is present on Lys-294. Lys-294 is modified (N6-succinyllysine; alternate). Lys-299 is subject to N6-acetyllysine. Position 333 is an N6-acetyllysine; alternate (Lys-333). The residue at position 333 (Lys-333) is an N6-succinyllysine; alternate. Lys-349 and Lys-362 each carry N6-acetyllysine. The active-site Proton donor/acceptor is Cys-459.

This sequence belongs to the thiolase-like superfamily. Thiolase family. In terms of assembly, heterotetramer of 2 alpha/HADHA and 2 beta/HADHB subunits; forms the mitochondrial trifunctional enzyme. Also purified as higher order heterooligomers including a 4 alpha/HADHA and 4 beta/HADHB heterooligomer which physiological significance remains unclear. The mitochondrial trifunctional enzyme interacts with MTLN. Interacts with RSAD2/viperin.

It is found in the mitochondrion. Its subcellular location is the mitochondrion inner membrane. The protein localises to the mitochondrion outer membrane. The protein resides in the endoplasmic reticulum. It carries out the reaction an acyl-CoA + acetyl-CoA = a 3-oxoacyl-CoA + CoA. The enzyme catalyses butanoyl-CoA + acetyl-CoA = 3-oxohexanoyl-CoA + CoA. It catalyses the reaction hexanoyl-CoA + acetyl-CoA = 3-oxooctanoyl-CoA + CoA. The catalysed reaction is octanoyl-CoA + acetyl-CoA = 3-oxodecanoyl-CoA + CoA. It carries out the reaction decanoyl-CoA + acetyl-CoA = 3-oxododecanoyl-CoA + CoA. The enzyme catalyses dodecanoyl-CoA + acetyl-CoA = 3-oxotetradecanoyl-CoA + CoA. It catalyses the reaction tetradecanoyl-CoA + acetyl-CoA = 3-oxohexadecanoyl-CoA + CoA. It participates in lipid metabolism; fatty acid beta-oxidation. In terms of biological role, mitochondrial trifunctional enzyme catalyzes the last three of the four reactions of the mitochondrial beta-oxidation pathway. The mitochondrial beta-oxidation pathway is the major energy-producing process in tissues and is performed through four consecutive reactions breaking down fatty acids into acetyl-CoA. Among the enzymes involved in this pathway, the trifunctional enzyme exhibits specificity for long-chain fatty acids. Mitochondrial trifunctional enzyme is a heterotetrameric complex composed of two proteins, the trifunctional enzyme subunit alpha/HADHA carries the 2,3-enoyl-CoA hydratase and the 3-hydroxyacyl-CoA dehydrogenase activities, while the trifunctional enzyme subunit beta/HADHB described here bears the 3-ketoacyl-CoA thiolase activity. The polypeptide is Trifunctional enzyme subunit beta, mitochondrial (HADHB) (Bos taurus (Bovine)).